Here is a 269-residue protein sequence, read N- to C-terminus: Adenosylcobinamide-GDP ribazoletransferase (269 aa).

5 helical membrane-spanning segments follow: residues Q8–I28, Y41–L61, V70–A90, I114–L136, and V196–V216.

This sequence belongs to the CobS family. Mg(2+) serves as cofactor.

It is found in the cell inner membrane. The catalysed reaction is alpha-ribazole + adenosylcob(III)inamide-GDP = adenosylcob(III)alamin + GMP + H(+). It catalyses the reaction alpha-ribazole 5'-phosphate + adenosylcob(III)inamide-GDP = adenosylcob(III)alamin 5'-phosphate + GMP + H(+). The protein operates within cofactor biosynthesis; adenosylcobalamin biosynthesis; adenosylcobalamin from cob(II)yrinate a,c-diamide: step 7/7. Joins adenosylcobinamide-GDP and alpha-ribazole to generate adenosylcobalamin (Ado-cobalamin). Also synthesizes adenosylcobalamin 5'-phosphate from adenosylcobinamide-GDP and alpha-ribazole 5'-phosphate. The chain is Adenosylcobinamide-GDP ribazoletransferase from Pseudoalteromonas atlantica (strain T6c / ATCC BAA-1087).